Reading from the N-terminus, the 1130-residue chain is Alpha-mannosidase 2 (1130 aa).

Over methionine 1 to arginine 14 the chain is Cytoplasmic. Residues isoleucine 15–serine 35 traverse the membrane as a helical; Signal-anchor for type II membrane protein segment. Residues proline 36–phenylalanine 1130 lie on the Lumenal side of the membrane. The N-linked (GlcNAc...) asparagine glycan is linked to asparagine 117. Positions 133 and 135 each coordinate Zn(2+). N-linked (GlcNAc...) asparagine glycosylation is present at asparagine 166. Zn(2+) contacts are provided by aspartate 247 and histidine 527. Aspartate 247 serves as the catalytic Nucleophile. Asparagine 622, asparagine 683, asparagine 1056, and asparagine 1095 each carry an N-linked (GlcNAc...) asparagine glycan.

The protein belongs to the glycosyl hydrolase 38 family. Homodimer; disulfide-linked. Zn(2+) serves as cofactor. Post-translationally, N-glycosylated.

It is found in the microsome membrane. The protein localises to the golgi apparatus membrane. It catalyses the reaction N(4)-{beta-D-GlcNAc-(1-&gt;2)-alpha-D-Man-(1-&gt;3)-[alpha-D-Man-(1-&gt;3)-[alpha-D-Man-(1-&gt;6)]-alpha-D-Man-(1-&gt;6)]-beta-D-Man-(1-&gt;4)-beta-D-GlcNAc-(1-&gt;4)-beta-D-GlcNAc}-L-asparaginyl-[protein] + 2 H2O = 2 alpha-D-mannopyranose + an N(4)-{beta-D-GlcNAc-(1-&gt;2)-alpha-D-Man-(1-&gt;3)-[alpha-D-Man-(1-&gt;6)]-beta-D-Man-(1-&gt;4)-beta-D-GlcNAc-(1-&gt;4)-beta-D-GlcNAc}-L-asparaginyl-[protein]. The protein operates within protein modification; protein glycosylation. With respect to regulation, inhibited by swainsonine. In terms of biological role, catalyzes the first committed step in the biosynthesis of complex N-glycans. It controls conversion of high mannose to complex N-glycans; the final hydrolytic step in the N-glycan maturation pathway. The polypeptide is Alpha-mannosidase 2 (Spodoptera frugiperda (Fall armyworm)).